A 415-amino-acid polypeptide reads, in one-letter code: Gamma-glutamyl phosphate reductase (415 aa).

This sequence belongs to the gamma-glutamyl phosphate reductase family.

It is found in the cytoplasm. The enzyme catalyses L-glutamate 5-semialdehyde + phosphate + NADP(+) = L-glutamyl 5-phosphate + NADPH + H(+). It participates in amino-acid biosynthesis; L-proline biosynthesis; L-glutamate 5-semialdehyde from L-glutamate: step 2/2. Catalyzes the NADPH-dependent reduction of L-glutamate 5-phosphate into L-glutamate 5-semialdehyde and phosphate. The product spontaneously undergoes cyclization to form 1-pyrroline-5-carboxylate. The protein is Gamma-glutamyl phosphate reductase of Clostridium perfringens (strain SM101 / Type A).